The following is a 103-amino-acid chain: Small ribosomal subunit protein uS14c (103 aa).

It belongs to the universal ribosomal protein uS14 family. Part of the 30S ribosomal subunit.

The protein localises to the plastid. It is found in the chloroplast. In terms of biological role, binds 16S rRNA, required for the assembly of 30S particles. This is Small ribosomal subunit protein uS14c from Agrostis stolonifera (Creeping bentgrass).